Consider the following 121-residue polypeptide: CRISPR system Cms protein Csm2 (121 aa).

The protein belongs to the CRISPR-associated Csm2 family. Part of the Csm effector complex that includes at least Cas10(1), Csm2(3), Csm3(5), Csm4(1), Csm5(1) and mature crRNA. The Csm complex is elongated and slightly twisted with a maximal length of 215 Angstroms and a diameter of 75-80 Angstroms. It has been modeled to have a central protein filamant of Csm3 subunits along which the dsRNA helix of paired crRNA and target RNA binds. The filament is capped at one end by Cas10 and Csm4 and at the other end by Csm5; ssDNA is thought to bind to the N-terminal HD domain of Cas10. Csm with a precursor crRNA does not include Csm5, while Cas6, the enzyme probably involved in pre-crRNA processing, is found associated with a subset of the Csm complex.

Functionally, CRISPR (clustered regularly interspaced short palindromic repeat) is an adaptive immune system that provides protection against mobile genetic elements (viruses, transposable elements and conjugative plasmids). CRISPR clusters contain spacers, sequences complementary to antecedent mobile elements, and target invading nucleic acids. CRISPR clusters are transcribed and processed into CRISPR RNA (crRNA). The type III-A Csm effector complex binds crRNA and acts as a crRNA-guided RNase, DNase and cyclic oligoadenylate synthase; binding of target RNA cognate to the crRNA is required for all activities. In a heterologous host this Csm effector complex restricts ssRNA phage MS2, suggesting it may target RNA viruses in vivo. In terms of biological role, csm functions as a non-specific ssDNase. Base-pairing between crRNA and target RNA to form a ternary Csm complex activates a ssDNase activity; target RNA cleavage suppresses the ssDNase, a temporal control that prevents uncontrolled DNA degradation. Viral RNA transcripts probably tether the Csm complex to the viral genome, recruiting Cas10 ssDNA activity which is able to degrade DNA in the transcription bubble, spatially controlling the DNase activity. Its function is as follows. This subunit may be involved in monitoring complementarity of crRNA and target RNA. This chain is CRISPR system Cms protein Csm2, found in Streptococcus thermophilus.